The chain runs to 179 residues: Large ribosomal subunit protein uL6 (179 aa).

Belongs to the universal ribosomal protein uL6 family. In terms of assembly, part of the 50S ribosomal subunit.

In terms of biological role, this protein binds to the 23S rRNA, and is important in its secondary structure. It is located near the subunit interface in the base of the L7/L12 stalk, and near the tRNA binding site of the peptidyltransferase center. The chain is Large ribosomal subunit protein uL6 from Synechocystis sp. (strain ATCC 27184 / PCC 6803 / Kazusa).